Reading from the N-terminus, the 314-residue chain is 2,3-dihydroxyphenylpropionate/2,3-dihydroxicinnamic acid 1,2-dioxygenase (314 aa).

His115 serves as the catalytic Proton donor. The active-site Proton acceptor is the His179.

It belongs to the LigB/MhpB extradiol dioxygenase family. As to quaternary structure, homotetramer. It depends on Fe(2+) as a cofactor.

It catalyses the reaction 3-(2,3-dihydroxyphenyl)propanoate + O2 = (2Z,4E)-2-hydroxy-6-oxonona-2,4-dienedioate + H(+). The catalysed reaction is (2E)-3-(2,3-dihydroxyphenyl)prop-2-enoate + O2 = (2Z,4E,7E)-2-hydroxy-6-oxonona-2,4,7-trienedioate + H(+). The protein operates within aromatic compound metabolism; 3-phenylpropanoate degradation. Functionally, catalyzes the non-heme iron(II)-dependent oxidative cleavage of 2,3-dihydroxyphenylpropionic acid and 2,3-dihydroxicinnamic acid into 2-hydroxy-6-ketononadienedioate and 2-hydroxy-6-ketononatrienedioate, respectively. This is 2,3-dihydroxyphenylpropionate/2,3-dihydroxicinnamic acid 1,2-dioxygenase from Escherichia coli O139:H28 (strain E24377A / ETEC).